The following is a 106-amino-acid chain: Toxin-like structure LSTX-D5 (106 aa).

Positions 1-20 (MMKVLVVVALLVTLISYSSS) are cleaved as a signal peptide. Positions 21 to 41 (EGIDDLETDELLSLMANEQTR) are excised as a propeptide. Disulfide bonds link C45/C60, C52/C69, C59/C85, and C71/C83.

Belongs to the neurotoxin 19 (CSTX) family. 02 (D7) subfamily. Expressed by the venom gland.

The protein resides in the secreted. This Lycosa singoriensis (Wolf spider) protein is Toxin-like structure LSTX-D5.